A 201-amino-acid polypeptide reads, in one-letter code: FMN-dependent NADH:quinone oxidoreductase (201 aa).

FMN is bound by residues S9 and 93–96 (MYNF).

Belongs to the azoreductase type 1 family. Homodimer. The cofactor is FMN.

It catalyses the reaction 2 a quinone + NADH + H(+) = 2 a 1,4-benzosemiquinone + NAD(+). The enzyme catalyses N,N-dimethyl-1,4-phenylenediamine + anthranilate + 2 NAD(+) = 2-(4-dimethylaminophenyl)diazenylbenzoate + 2 NADH + 2 H(+). Its function is as follows. Quinone reductase that provides resistance to thiol-specific stress caused by electrophilic quinones. In terms of biological role, also exhibits azoreductase activity. Catalyzes the reductive cleavage of the azo bond in aromatic azo compounds to the corresponding amines. This chain is FMN-dependent NADH:quinone oxidoreductase, found in Bradyrhizobium sp. (strain BTAi1 / ATCC BAA-1182).